Reading from the N-terminus, the 199-residue chain is dITP/XTP pyrophosphatase (199 aa).

7 to 12 (SNNPGK) is a substrate binding site. Asp-68 functions as the Proton acceptor in the catalytic mechanism. Asp-68 contributes to the Mg(2+) binding site. Substrate is bound by residues Ala-69, 154-157 (FGFD), Lys-177, and 182-183 (HR).

The protein belongs to the HAM1 NTPase family. In terms of assembly, homodimer. Mg(2+) is required as a cofactor.

The enzyme catalyses XTP + H2O = XMP + diphosphate + H(+). It catalyses the reaction dITP + H2O = dIMP + diphosphate + H(+). The catalysed reaction is ITP + H2O = IMP + diphosphate + H(+). In terms of biological role, pyrophosphatase that catalyzes the hydrolysis of nucleoside triphosphates to their monophosphate derivatives, with a high preference for the non-canonical purine nucleotides XTP (xanthosine triphosphate), dITP (deoxyinosine triphosphate) and ITP. Seems to function as a house-cleaning enzyme that removes non-canonical purine nucleotides from the nucleotide pool, thus preventing their incorporation into DNA/RNA and avoiding chromosomal lesions. The chain is dITP/XTP pyrophosphatase from Verminephrobacter eiseniae (strain EF01-2).